The following is an 863-amino-acid chain: Glycogen phosphorylase (863 aa).

Lys-618 carries the post-translational modification N6-(pyridoxal phosphate)lysine.

It belongs to the glycogen phosphorylase family. Pyridoxal 5'-phosphate serves as cofactor.

The catalysed reaction is [(1-&gt;4)-alpha-D-glucosyl](n) + phosphate = [(1-&gt;4)-alpha-D-glucosyl](n-1) + alpha-D-glucose 1-phosphate. In terms of biological role, phosphorylase is an important allosteric enzyme in carbohydrate metabolism. Enzymes from different sources differ in their regulatory mechanisms and in their natural substrates. However, all known phosphorylases share catalytic and structural properties. In Mycobacterium bovis (strain ATCC BAA-935 / AF2122/97), this protein is Glycogen phosphorylase (glgP).